Reading from the N-terminus, the 125-residue chain is MAVCIIDHDNIRGVIYFEPVHGKDKVLGSVIGLKSGTYNLIIHRYGDISRGCDSIGSPEIFIGNIFVNRYGVAYVYLDTDVNISTIIGKALSISKNNQRLACGVIGISYINEKIIHFLTINENGV.

Cysteine 52 and cysteine 102 form a disulfide bridge.

Belongs to the Cu-Zn superoxide dismutase family.

Its subcellular location is the host cytoplasm. Virion protein with no enzymatic activity. This is Cu-Zn superoxide dismutase-like protein from Camelpox virus (strain M-96).